The chain runs to 185 residues: Ribosome-recycling factor (185 aa).

This sequence belongs to the RRF family.

It is found in the cytoplasm. Functionally, responsible for the release of ribosomes from messenger RNA at the termination of protein biosynthesis. May increase the efficiency of translation by recycling ribosomes from one round of translation to another. The sequence is that of Ribosome-recycling factor from Thermotoga sp. (strain RQ2).